A 272-amino-acid polypeptide reads, in one-letter code: Shikimate dehydrogenase (NADP(+)) (272 aa).

Shikimate contacts are provided by residues serine 14–serine 16 and threonine 61. Lysine 65 (proton acceptor) is an active-site residue. NADP(+) is bound at residue glutamate 77. Shikimate contacts are provided by asparagine 86 and aspartate 102. NADP(+)-binding positions include glycine 126–alanine 130, asparagine 149–arginine 154, and methionine 213. A shikimate-binding site is contributed by tyrosine 215. Residue glycine 237 coordinates NADP(+).

Belongs to the shikimate dehydrogenase family. In terms of assembly, homodimer.

The catalysed reaction is shikimate + NADP(+) = 3-dehydroshikimate + NADPH + H(+). It functions in the pathway metabolic intermediate biosynthesis; chorismate biosynthesis; chorismate from D-erythrose 4-phosphate and phosphoenolpyruvate: step 4/7. In terms of biological role, involved in the biosynthesis of the chorismate, which leads to the biosynthesis of aromatic amino acids. Catalyzes the reversible NADPH linked reduction of 3-dehydroshikimate (DHSA) to yield shikimate (SA). The sequence is that of Shikimate dehydrogenase (NADP(+)) from Salmonella paratyphi A (strain ATCC 9150 / SARB42).